The primary structure comprises 926 residues: Nitrate reductase [NADH] (926 aa).

Residues 1 to 85 (MAASVDRQYH…SDSEEDDDEN (85 aa)) form a disordered region. The segment covering 36 to 46 (YTFSNPPSSNG) has biased composition (polar residues). Residues 58–73 (DNNSNSNNGSNNNNNR) show a composition bias toward low complexity. Mo-molybdopterin is bound at residue C204. In terms of domain architecture, Cytochrome b5 heme-binding spans 551-626 (SKMYSMSEVK…LEDFRIGELI (76 aa)). 2 residues coordinate heme: H586 and H609. The 113-residue stretch at 670 to 782 (RVKIPCKLIE…KGPLGHIEYL (113 aa)) folds into the FAD-binding FR-type domain. FAD contacts are provided by residues 722–725 (RAYT), 739–743 (VVKVY), F744, F751, 756–758 (VMS), and T809.

This sequence belongs to the nitrate reductase family. In terms of assembly, homodimer. FAD is required as a cofactor. Requires heme as cofactor. The cofactor is Mo-molybdopterin.

The catalysed reaction is nitrite + NAD(+) + H2O = nitrate + NADH + H(+). Its function is as follows. Nitrate reductase is a key enzyme involved in the first step of nitrate assimilation in plants, fungi and bacteria. This Spinacia oleracea (Spinach) protein is Nitrate reductase [NADH] (NIA).